We begin with the raw amino-acid sequence, 414 residues long: uncharacterized protein (414 aa).

Residues 246–360 (EAPNITKLAG…LNKRVEEIRR (115 aa)) enclose the Nop domain. Positions 358–414 (IRRKYPKPPKKKKKEKPKAKKKEKKGKKEKSKKKKDKKKDKKGKKERKVIGKTKSRK) are disordered. Basic residues predominate over residues 361–414 (KYPKPPKKKKKEKPKAKKKEKKGKKEKSKKKKDKKKDKKGKKERKVIGKTKSRK).

Belongs to the NOP5/NOP56 family.

This is an uncharacterized protein from Methanocaldococcus jannaschii (strain ATCC 43067 / DSM 2661 / JAL-1 / JCM 10045 / NBRC 100440) (Methanococcus jannaschii).